We begin with the raw amino-acid sequence, 44 residues long: pyr operon leader peptide (44 aa).

This Escherichia coli O157:H7 protein is pyr operon leader peptide (pyrL).